The chain runs to 56 residues: Meucin-25 (56 aa).

An N-terminal signal peptide occupies residues methionine 1–serine 31.

Belongs to the non-disulfide-bridged peptide (NDBP) superfamily. Antimalarial peptide (group 5) family. In terms of tissue distribution, expressed by the venom gland.

The protein resides in the secreted. Functionally, this synthetic cationic peptide inhibits the development of Plasmodium berghei ookinetes, kills intraerythrocytic P.falciparum, and is cytotoxic to the Drosophila S2 cell at micromolar concentrations. No antibacterial, antifungal and hemolytic activities have been found at micromolar concentrations. The protein is Meucin-25 of Mesobuthus eupeus (Lesser Asian scorpion).